The following is a 386-amino-acid chain: Cytochrome b (386 aa).

The next 4 helical transmembrane spans lie at 32–52, 76–98, 113–133, and 179–199; these read FGSLLALCLIIQIVTGVTLAM, WLIRYLHANTASAFFFLVYLHVG, TWIIGSIILIVMMATAFLGYV, and FFALHFVLPFVLAALVIMHLI. Residues His-82 and His-96 each contribute to the heme b site. Positions 183 and 197 each coordinate heme b. His-202 lines the a ubiquinone pocket. A run of 4 helical transmembrane segments spans residues 226–246, 290–310, 322–342, and 349–369; these read YIFKDLITIFLFFFVLSLFVF, LLGVIAMFSAILIILVMPITD, LSKVAFYVFVANFLILMQLGA, and FIEFGQISTVLYFSHFLVIMP.

It belongs to the cytochrome b family. In terms of assembly, fungal cytochrome b-c1 complex contains 10 subunits; 3 respiratory subunits, 2 core proteins and 5 low-molecular weight proteins. Cytochrome b-c1 complex is a homodimer. Heme b is required as a cofactor.

It is found in the mitochondrion inner membrane. Component of the ubiquinol-cytochrome c reductase complex (complex III or cytochrome b-c1 complex) that is part of the mitochondrial respiratory chain. The b-c1 complex mediates electron transfer from ubiquinol to cytochrome c. Contributes to the generation of a proton gradient across the mitochondrial membrane that is then used for ATP synthesis. The polypeptide is Cytochrome b (cob) (Talaromyces marneffei (Penicillium marneffei)).